Reading from the N-terminus, the 230-residue chain is MTGLFPDNPEAPIDLLALEGQALRRGYFRIAGIDEAGRGPLAGPVVAAAVMLPAGLLLPGVNDSKQLTEEKREELFDVIHREALAVGVGIGDHALVDSINILQATLSAMRDAVRALSITPGFLLIDGISNIPMNIPQRTVKKGDSLSLSIAAASIIAKVTRDRMMVEYDAQYPGYGFASHKGYGAASHLAAIAELGPCPIHRKTFSGVKEHLPSQPDSDTAGPSTGLFSF.

An RNase H type-2 domain is found at F28–D217. Positions 34, 35, and 126 each coordinate a divalent metal cation. The disordered stretch occupies residues K209 to F230. Over residues Q215 to F230 the composition is skewed to polar residues.

It belongs to the RNase HII family. Requires Mn(2+) as cofactor. Mg(2+) is required as a cofactor.

The protein resides in the cytoplasm. The catalysed reaction is Endonucleolytic cleavage to 5'-phosphomonoester.. In terms of biological role, endonuclease that specifically degrades the RNA of RNA-DNA hybrids. The polypeptide is Ribonuclease HII (Citrifermentans bemidjiense (strain ATCC BAA-1014 / DSM 16622 / JCM 12645 / Bem) (Geobacter bemidjiensis)).